Here is a 344-residue protein sequence, read N- to C-terminus: Holliday junction branch migration complex subunit RuvB (344 aa).

The segment at 1 to 182 (MRIEALNTAP…FGINSRLDYY (182 aa)) is large ATPase domain (RuvB-L). ATP is bound by residues Ile-21, Arg-22, Gly-63, Lys-66, Thr-67, Thr-68, 129-131 (EDY), Arg-172, Tyr-182, and Arg-219. Thr-67 serves as a coordination point for Mg(2+). Residues 183–253 (NPELLQSIII…VARRTLESLE (71 aa)) are small ATPAse domain (RuvB-S). Residues 256–344 (EGGLDDMDKK…GSLFDTAEDG (89 aa)) form a head domain (RuvB-H) region. Residues Arg-311 and Arg-316 each contribute to the DNA site.

It belongs to the RuvB family. As to quaternary structure, homohexamer. Forms an RuvA(8)-RuvB(12)-Holliday junction (HJ) complex. HJ DNA is sandwiched between 2 RuvA tetramers; dsDNA enters through RuvA and exits via RuvB. An RuvB hexamer assembles on each DNA strand where it exits the tetramer. Each RuvB hexamer is contacted by two RuvA subunits (via domain III) on 2 adjacent RuvB subunits; this complex drives branch migration. In the full resolvosome a probable DNA-RuvA(4)-RuvB(12)-RuvC(2) complex forms which resolves the HJ.

The protein resides in the cytoplasm. The catalysed reaction is ATP + H2O = ADP + phosphate + H(+). Functionally, the RuvA-RuvB-RuvC complex processes Holliday junction (HJ) DNA during genetic recombination and DNA repair, while the RuvA-RuvB complex plays an important role in the rescue of blocked DNA replication forks via replication fork reversal (RFR). RuvA specifically binds to HJ cruciform DNA, conferring on it an open structure. The RuvB hexamer acts as an ATP-dependent pump, pulling dsDNA into and through the RuvAB complex. RuvB forms 2 homohexamers on either side of HJ DNA bound by 1 or 2 RuvA tetramers; 4 subunits per hexamer contact DNA at a time. Coordinated motions by a converter formed by DNA-disengaged RuvB subunits stimulates ATP hydrolysis and nucleotide exchange. Immobilization of the converter enables RuvB to convert the ATP-contained energy into a lever motion, pulling 2 nucleotides of DNA out of the RuvA tetramer per ATP hydrolyzed, thus driving DNA branch migration. The RuvB motors rotate together with the DNA substrate, which together with the progressing nucleotide cycle form the mechanistic basis for DNA recombination by continuous HJ branch migration. Branch migration allows RuvC to scan DNA until it finds its consensus sequence, where it cleaves and resolves cruciform DNA. The sequence is that of Holliday junction branch migration complex subunit RuvB from Chlorobaculum tepidum (strain ATCC 49652 / DSM 12025 / NBRC 103806 / TLS) (Chlorobium tepidum).